A 506-amino-acid chain; its full sequence is Histidine ammonia-lyase (506 aa).

The 5-imidazolinone (Ala-Gly) cross-link spans 141–143 (ASG). Residue Ser142 is modified to 2,3-didehydroalanine (Ser).

Belongs to the PAL/histidase family. In terms of processing, contains an active site 4-methylidene-imidazol-5-one (MIO), which is formed autocatalytically by cyclization and dehydration of residues Ala-Ser-Gly.

The protein localises to the cytoplasm. It catalyses the reaction L-histidine = trans-urocanate + NH4(+). It participates in amino-acid degradation; L-histidine degradation into L-glutamate; N-formimidoyl-L-glutamate from L-histidine: step 1/3. The polypeptide is Histidine ammonia-lyase (Burkholderia multivorans (strain ATCC 17616 / 249)).